We begin with the raw amino-acid sequence, 306 residues long: MSVPDVSVVKAFLLDLQQRICDGLEQLDGEAKFKADSWKREEGGGGTSRVLTQGKVFEQAGVNFSHVTGAAMPASATAHRPELAGRSFEAMGVSLVIHPNNPYIPTTHANVRFFIAKKEGADPVWWFGGGFDLTPYYPFKEDVIEWHQNAHDLCLPFGEEVYPKYKKWCDDYFYLPHRDETRGVGGLFFDDLNAEGFDTSFAFMQAVGNGFLTAYAPIVQRRKETQYGEREREFQLYRRGRYVEFNLVYDRGTLFGLQTGGRTESILMSMPPLVRWEYMYTPEENSPESLLYSDYLTPKDWLSLNK.

Serine 94 lines the substrate pocket. Residues histidine 98 and histidine 108 each coordinate a divalent metal cation. The Proton donor role is filled by histidine 108. Residue 110-112 (NVR) participates in substrate binding. Residues histidine 147 and histidine 177 each contribute to the a divalent metal cation site. Residues 242 to 277 (YVEFNLVYDRGTLFGLQTGGRTESILMSMPPLVRWE) form an important for dimerization region. 260–262 (GGR) lines the substrate pocket.

This sequence belongs to the aerobic coproporphyrinogen-III oxidase family. In terms of assembly, homodimer. A divalent metal cation is required as a cofactor.

Its subcellular location is the cytoplasm. The enzyme catalyses coproporphyrinogen III + O2 + 2 H(+) = protoporphyrinogen IX + 2 CO2 + 2 H2O. It functions in the pathway porphyrin-containing compound metabolism; protoporphyrin-IX biosynthesis; protoporphyrinogen-IX from coproporphyrinogen-III (O2 route): step 1/1. Functionally, involved in the heme biosynthesis. Catalyzes the aerobic oxidative decarboxylation of propionate groups of rings A and B of coproporphyrinogen-III to yield the vinyl groups in protoporphyrinogen-IX. The protein is Oxygen-dependent coproporphyrinogen-III oxidase of Shewanella woodyi (strain ATCC 51908 / MS32).